Consider the following 351-residue polypeptide: MLYYLYEHFHINIFHYITFRAILAFFLSFFITIFIMPKFISWAKAKATQPIFELAPDNHKTKNSTPTMGGLIYITSAVISILITTEFNKYVLLTLLLLVYFTYLGFIDDYGKIKGSSNKAGLSAKTKFLLQWVGALVISYLLIKVGFDTKLYVPFYKYPIFDMGYYAVIFWAFIIVAMSNAVNLTDGLDGLATVPSIFSLFTLGILLYIVGNYKFSSYLFYPFELGVGELTIIVFALIGALLGFLWYNANPAEVFMGDSGSLPLGAVIGFLAIVAKSELLLIFIAFVFIMETVSVILQVGSYKTRGKRVFKMAPIHHHFEMLGWKENKITIRFWIMALITNLIAILSIKIR.

Transmembrane regions (helical) follow at residues 22–42, 65–85, 87–107, 128–148, 158–178, 190–210, 225–245, 254–274, 279–299, and 328–348; these read ILAF…FISW, TPTM…LITT, FNKY…LGFI, FLLQ…VGFD, YPIF…IVAM, GLAT…LYIV, LGVG…LGFL, VFMG…LAIV, LLLI…ILQV, and KITI…ILSI.

The protein belongs to the glycosyltransferase 4 family. MraY subfamily. It depends on Mg(2+) as a cofactor.

It localises to the cell inner membrane. It catalyses the reaction UDP-N-acetyl-alpha-D-muramoyl-L-alanyl-gamma-D-glutamyl-meso-2,6-diaminopimeloyl-D-alanyl-D-alanine + di-trans,octa-cis-undecaprenyl phosphate = di-trans,octa-cis-undecaprenyl diphospho-N-acetyl-alpha-D-muramoyl-L-alanyl-D-glutamyl-meso-2,6-diaminopimeloyl-D-alanyl-D-alanine + UMP. It participates in cell wall biogenesis; peptidoglycan biosynthesis. Catalyzes the initial step of the lipid cycle reactions in the biosynthesis of the cell wall peptidoglycan: transfers peptidoglycan precursor phospho-MurNAc-pentapeptide from UDP-MurNAc-pentapeptide onto the lipid carrier undecaprenyl phosphate, yielding undecaprenyl-pyrophosphoryl-MurNAc-pentapeptide, known as lipid I. The polypeptide is Phospho-N-acetylmuramoyl-pentapeptide-transferase (Nautilia profundicola (strain ATCC BAA-1463 / DSM 18972 / AmH)).